Consider the following 3966-residue polypeptide: Histone-lysine N-methyltransferase 2A (3966 aa).

Disordered regions lie at residues 1–106 and 130–231; these read MAHS…LLRV and VFGE…GVKI. Residues 6 to 25 carry the Menin-binding motif (MBM) motif; the sequence is RWRFPARPGTTGGGGGGGRR. Residues 15–29 show a composition bias toward gly residues; sequence TTGGGGGGGRRGLGG. Residues 75 to 102 are compositionally biased toward low complexity; it reads GAAAASAASSSSASSSSSSSSSASSGPA. An Integrase domain-binding motif 1 (IBM1) motif is present at residues 121 to 132; the sequence is GTNLRRFRAVFG. Residues S134 and S140 each carry the phosphoserine; by CK2 modification. The Integrase domain-binding motif 2 (IBM2) motif lies at 145–150; that stretch reads QFLGFG. Position 151 is a phosphoserine (S151). The segment at residues 167–178 is a DNA-binding region (a.T hook 1); sequence KASPRKPRGRPR. S195 bears the Phosphoserine mark. Residues 200–218 show a composition bias toward basic and acidic residues; sequence SETKSADKIKKKDSKSIEK. A DNA-binding region (a.T hook 2) is located at residues 215-225; it reads SIEKKRGRPPT. Position 237 is an N6-acetyllysine (K237). The a.T hook 3 DNA-binding region spans 299–307; sequence RRRGRPPST. The interval 322–343 is disordered; it reads LEKPQKVRKDKEGTPPLTKEDK. K371 is modified (N6-acetyllysine). The tract at residues 440–590 is disordered; sequence RLESTPNSRF…PWLMPPTIPL (151 aa). Over residues 450-489 the composition is skewed to low complexity; it reads SATSCGSSEKSSAASQHSSQMSSDSSRSSSPSIDTTSDSQ. Phosphoserine is present on S516. Positions 544–557 are enriched in low complexity; that stretch reads LPTLQSAPQQQTSS. Positions 558–571 are enriched in pro residues; the sequence is SPPPPLLTPPPPLQ. K634 carries the N6-acetyllysine modification. The residue at position 678 (S678) is a Phosphoserine. Disordered regions lie at residues 711–943, 963–1003, 1034–1064, and 1101–1161; these read ESVT…ADVA, RGNL…TSSI, IEKS…RGPR, and ILSS…CQVP. Composition is skewed to low complexity over residues 717–730 and 760–790; these read SNRT…SGVS and LSTS…ASAL. Composition is skewed to polar residues over residues 791-806 and 817-830; these read NPTF…QSGE and QTSA…SNSP. At T837 the chain carries Phosphothreonine. Over residues 843–887 the composition is skewed to basic and acidic residues; it reads EKGRKKDTAPEELSKDRDADKSVEKDKSRERDREREKENKRESRK. S923 bears the Phosphoserine mark. Residues 989-1003 show a composition bias toward low complexity; it reads SAPSSSTVKHSTSSI. The span at 1040-1059 shows a compositional bias: polar residues; sequence LKQTDQPKAQGQESDSSETS. S1053 bears the Phosphoserine mark. Basic and acidic residues predominate over residues 1101–1111; that stretch reads ILSSMGNDDKS. K1127 carries the post-translational modification N6-acetyllysine. The CXXC-type zinc finger occupies 1144 to 1192; it reads KKGRRSRRCGQCPGCQVPEDCGICTNCLDKPKFGGRNIKKQCCKMRKCQ. C1152, C1155, C1158, C1164, C1167, C1170, C1186, and C1191 together coordinate Zn(2+). A disordered region spans residues 1196 to 1390; it reads WMPSKASLQK…PLSNGISSKQ (195 aa). Positions 1217 to 1229 are enriched in basic and acidic residues; it reads SKTTEKKESKEST. Low complexity predominate over residues 1230-1241; that stretch reads AVKSPLEPAQKA. N6-acetyllysine is present on K1232. Basic and acidic residues predominate over residues 1245–1270; that stretch reads PREEPAPKKSSSEPPPRKPVEEKSEE. The segment covering 1369–1390 has biased composition (polar residues); sequence KQENAGTLNILNPLSNGISSKQ. 3 PHD-type zinc fingers span residues 1430–1481, 1478–1532, and 1565–1629; these read RVVC…CKFC, CKFC…CVRC, and GNFC…CTER. Residues 1583–1599 form an interaction with histone H3K4me3 region; the sequence is KMMQCGKCDRWVHSKCE. Residues 1637–1767 enclose the Bromo domain; the sequence is ALEKELQASL…SFFIRQMERV (131 aa). 2 disordered regions span residues 1665-1714 and 1807-1870; these read YRQA…EGVK and WQER…PGID. A compositionally biased stretch (pro residues) spans 1828-1849; the sequence is APKPKGPGEPDSPTPLHPPTPP. S1839 is modified (phosphoserine). Position 1847 is a phosphothreonine (T1847). S1860 is modified (phosphoserine). The C2HC pre-PHD-type zinc-finger motif lies at 1872-1912; sequence NRQCALCLMYGDDSANDAGRLLYIGQNEWTHVNCALWSAEV. The PHD-type 4 zinc-finger motif lies at 1933–1980; the sequence is LRCEFCQKPGATVGCCLTSCTSNYHFMCSRAKNCVFLDDKKVYCQRHR. Residues 2020–2076 form the FYR N-terminal domain; sequence NIHMMIGSMTIDCLGILNDLSDCEDKLFPIGYQCSRVYWSTTDARKRCVYTCKIMEC. Phosphoserine is present on S2100. Positions 2147-2174 are disordered; sequence RTPSYSPTQRSPGCRPLPSAGSPTPTTH. T2148 carries the post-translational modification Phosphothreonine. Phosphoserine is present on residues S2152 and S2202. 4 disordered regions span residues 2214–2339, 2371–2619, 2639–2673, and 2709–2759; these read VRTG…ATPG, RGQR…SARA, EDIP…SDED, and KISQ…DAGE. The span at 2218-2230 shows a compositional bias: low complexity; it reads SAYSRSSVSSVPS. 2 stretches are compositionally biased toward polar residues: residues 2250–2284 and 2308–2320; these read LSSS…SSPS and TSSS…SAHS. 2 stretches are compositionally biased toward basic and acidic residues: residues 2411–2422 and 2430–2440; these read ILHEHIGSSSRD and SSKETCKEKHS. Positions 2498 to 2509 are enriched in polar residues; that stretch reads GQSTQVEGSSKE. A Glycyl lysine isopeptide (Lys-Gly) (interchain with G-Cter in SUMO2) cross-link involves residue K2524. Residues 2528 to 2537 show a composition bias toward polar residues; the sequence is ENQSKNTQKE. S2560 is modified (phosphoserine). A compositionally biased stretch (polar residues) spans 2569–2588; that stretch reads PSPNNTLSQDPQSNNYQNLP. Residue S2607 is modified to Phosphoserine. A compositionally biased stretch (basic residues) spans 2609–2618; it reads KRRYPRRSAR. The span at 2663 to 2673 shows a compositional bias: acidic residues; that stretch reads GADDLSTSDED. Residues 2722–2737 show a composition bias toward polar residues; it reads SDTSVTATSRKSSQIP. Over residues 2740–2759 the composition is skewed to basic and acidic residues; sequence NGKENGTENLKIDRPEDAGE. Position 2792 is a phosphoserine (S2792). Positions 2843–2851 match the 9aaTAD motif; the sequence is SDIMDFVLK. The residue at position 2951 (S2951) is a Phosphoserine. K2954 bears the N6-acetyllysine mark. Disordered stretches follow at residues 2958–3060 and 3164–3239; these read ITEK…NAAV and AAQS…PSNI. Residues 3012–3025 show a composition bias toward polar residues; it reads HGNSQDLTRNSGTP. A Phosphoserine modification is found at S3032. Positions 3035-3060 are enriched in polar residues; it reads VPVQNQKYVPSSTDSPGPSQISNAAV. A compositionally biased stretch (low complexity) spans 3167–3178; sequence SSFPPNISSPPS. Polar residues predominate over residues 3196-3212; sequence EANQRTDLTTTVATPSS. Residues 3214 to 3229 show a composition bias toward basic residues; sequence LKKRPISRLHTRKNKK. Phosphothreonine is present on T3369. K3459 is subject to N6-acetyllysine. Residues 3462–3640 are disordered; sequence TLTSQRDRDP…AMEEEESGFS (179 aa). The span at 3475 to 3487 shows a compositional bias: polar residues; the sequence is PGTQPSNFTQTAE. The segment covering 3501–3528 has biased composition (low complexity); that stretch reads PSAKPASSASPGSSPSSGQQSGSSSVPG. A phosphoserine mark is found at S3510 and S3523. Basic and acidic residues predominate over residues 3558 to 3570; it reads TSSEAHIPHRDTD. The 82-residue stretch at 3663 to 3744 folds into the FYR C-terminal domain; the sequence is KKGLVFEISS…KHCRNYKFRF (82 aa). The WDR5 interaction motif (WIN) motif lies at 3759–3764; sequence GSARAE. Residues 3782–3805 form a disordered region; sequence HRQPPEYNPNDEEEEEVQLKSARR. Residues 3826–3942 form the SET domain; sequence EAVGVYRSPI…RGEELTYDYK (117 aa). S-adenosyl-L-methionine contacts are provided by H3836 and R3838. The residue at position 3879 (C3879) is an S-methylcysteine; by autocatalysis. Residues Y3880 and 3903 to 3904 contribute to the S-adenosyl-L-methionine site; that span reads NH. C3906 and C3954 together coordinate Zn(2+). In terms of domain architecture, Post-SET spans 3950–3966; it reads NKLPCNCGAKKCRKFLN. Residue N3955 coordinates S-adenosyl-L-methionine. Residues C3956 and C3961 each contribute to the Zn(2+) site.

This sequence belongs to the class V-like SAM-binding methyltransferase superfamily. Histone-lysine methyltransferase family. TRX/MLL subfamily. As to quaternary structure, MLL cleavage product N320 heterodimerizes with MLL cleavage product C180 (via SET and FYRC domains). Component of some MLL1/MLL complex, at least composed of the core components KMT2A/MLL1, ASH2L, HCFC1/HCF1, HCFC2, WDR5, DPY30 and RBBP5, as well as the facultative components BACC1, CHD8, E2F6, HSP70, INO80C, KANSL1, LAS1L, MAX, MCRS1, MEN1, MGA, KAT8/MOF, PELP1, PHF20, PRP31, RING2, RUVB1/TIP49A, RUVB2/TIP49B, SENP3, TAF1, TAF4, TAF6, TAF7, TAF9 and TEX10. Interacts (via WIN motif) with WDR5; the interaction is direct. Interaction with WDR5 is required for stable interaction with ASH2L and RBBP5, and thereby also for optimal histone methyltransferase activity. Interacts with KAT8/MOF; the interaction is direct. Interacts with SBF1 and PPP1R15A. Interacts with ZNF335. Interacts with CLOCK and BMAL1 in a circadian manner. Interacts with PPIE; this results in decreased histone H3 methyltransferase activity. Interacts with CREBBP. Interacts with the WRAD complex composed of WDR5, RBBP5, ASH2L and DPY30. Interacts (via MBM motif) with MEN1. Interacts (via IBM motifs) with PSIP1 (via IBD domain) with moderate affinity whereas the KMT2A-MEN1 complex interacts with a greater affinity; MEN1 enhances interaction of KMT2A with PSIP1. Phosphorylation increases its affinity for PSIP1. Forms a complex with CREBBP and CREB1. Proteolytic cleavage by TASP1 generates MLL cleavage 3product N320 and MLL cleavage product C180, which reassemble through a non-covalent association. 2 cleavage sites exist, cleavage site 1 (CS1) and cleavage site 2 (CS2), to generate MLL cleavage products N320 and C180. CS2 is the major site. Post-translationally, phosphorylation increases its interaction with PSIP1. In terms of processing, auto-methylated at Cys-3879: auto-methylation is inhibited by the WRAD complex and unmodified histone H3.

The protein localises to the nucleus. It carries out the reaction L-lysyl(4)-[histone H3] + S-adenosyl-L-methionine = N(6)-methyl-L-lysyl(4)-[histone H3] + S-adenosyl-L-homocysteine + H(+). The catalysed reaction is N(6)-methyl-L-lysyl(4)-[histone H3] + S-adenosyl-L-methionine = N(6),N(6)-dimethyl-L-lysyl(4)-[histone H3] + S-adenosyl-L-homocysteine + H(+). The enzyme catalyses L-cysteinyl-[protein] + S-adenosyl-L-methionine = S-methyl-L-cysteinyl-[protein] + S-adenosyl-L-homocysteine + H(+). Histone methyltransferase that plays an essential role in early development and hematopoiesis. Catalytic subunit of the MLL1/MLL complex, a multiprotein complex that mediates both methylation of 'Lys-4' of histone H3 (H3K4me) complex and acetylation of 'Lys-16' of histone H4 (H4K16ac). Catalyzes methyl group transfer from S-adenosyl-L-methionine to the epsilon-amino group of 'Lys-4' of histone H3 (H3K4) via a non-processive mechanism. Part of chromatin remodeling machinery predominantly forms H3K4me1 and H3K4me2 methylation marks at active chromatin sites where transcription and DNA repair take place. Has weak methyltransferase activity by itself, and requires other component of the MLL1/MLL complex to obtain full methyltransferase activity. Has no activity toward histone H3 phosphorylated on 'Thr-3', less activity toward H3 dimethylated on 'Arg-8' or 'Lys-9', while it has higher activity toward H3 acetylated on 'Lys-9'. Binds to unmethylated CpG elements in the promoter of target genes and helps maintain them in the nonmethylated state. Required for transcriptional activation of HOXA9. Promotes PPP1R15A-induced apoptosis. Plays a critical role in the control of circadian gene expression and is essential for the transcriptional activation mediated by the CLOCK-BMAL1 heterodimer. Establishes a permissive chromatin state for circadian transcription by mediating a rhythmic methylation of 'Lys-4' of histone H3 (H3K4me) and this histone modification directs the circadian acetylation at H3K9 and H3K14 allowing the recruitment of CLOCK-BMAL1 to chromatin. Also has auto-methylation activity on Cys-3879 in absence of histone H3 substrate. In Mus musculus (Mouse), this protein is Histone-lysine N-methyltransferase 2A (Kmt2a).